The sequence spans 368 residues: MTQSVMNPENYQVQLDEKAEALSAMFSEFNVPELEVFSSPAENYRMRAEFRVWHEGDEMYYVMFNQETKEKYRVDYFLPASRLINDLMPLLTEAVKESKTLRYKMFQVDFLSTLSGEILVSMLYHRQLDDAWKEEAKALKQRLNDEGFNLNIIGRARKMKIVLDQEFVIEKLKVNDDILTYKQVENSFTQPNGIVAQKMLEWAVDCTQNSQGDLLELYCGNGNFSLALAKNFDRVLATELAKPSVDSAQYNIAANNIDNVQIIRMSAEDFTDAMEGKREFRRLKDQNIDLKSYNCNTIFVDPPRSGMDEGTCKMVQGYERIMYISCNPETLKENLEILSQTHNITRFALFDQFPYTHHMEAGVFLERK.

S-adenosyl-L-methionine-binding residues include Gln-190, Tyr-218, Asn-223, Glu-239, and Asp-301. Cys-326 serves as the catalytic Nucleophile. The Proton acceptor role is filled by Glu-360.

The protein belongs to the class I-like SAM-binding methyltransferase superfamily. RNA M5U methyltransferase family. TrmA subfamily.

The catalysed reaction is uridine(54) in tRNA + S-adenosyl-L-methionine = 5-methyluridine(54) in tRNA + S-adenosyl-L-homocysteine + H(+). It carries out the reaction uridine(341) in tmRNA + S-adenosyl-L-methionine = 5-methyluridine(341) in tmRNA + S-adenosyl-L-homocysteine + H(+). In terms of biological role, dual-specificity methyltransferase that catalyzes the formation of 5-methyluridine at position 54 (m5U54) in all tRNAs, and that of position 341 (m5U341) in tmRNA (transfer-mRNA). The protein is tRNA/tmRNA (uracil-C(5))-methyltransferase of Aliivibrio fischeri (strain MJ11) (Vibrio fischeri).